The following is a 102-amino-acid chain: MKFTIIALCLALSLVGMTSSEKLLDRIRANSLENLSRLVPSLCLLPSGRGNCDSQILRYFYNATSHTCEVFLYSGCNGNGNNFDSLECCLKTCRLNKYRNNN.

An N-terminal signal peptide occupies residues Met1–Ser20. N-linked (GlcNAc...) asparagine glycans are attached at residues Asn34 and Asn62. The region spanning Cys43–Cys93 is the BPTI/Kunitz inhibitor domain. Intrachain disulfides connect Cys43–Cys93, Cys52–Cys76, and Cys68–Cys89.

In terms of processing, N-glycosylated. As to expression, expressed by the mammary gland.

It localises to the secreted. The polypeptide is Early lactation protein (ELP) (Trichosurus vulpecula (Brush-tailed possum)).